Here is a 263-residue protein sequence, read N- to C-terminus: Hydroxyethylthiazole kinase (263 aa).

Substrate is bound at residue methionine 41. 2 residues coordinate ATP: lysine 117 and serine 163. Glycine 190 serves as a coordination point for substrate.

The protein belongs to the Thz kinase family. Requires Mg(2+) as cofactor.

The enzyme catalyses 5-(2-hydroxyethyl)-4-methylthiazole + ATP = 4-methyl-5-(2-phosphooxyethyl)-thiazole + ADP + H(+). It functions in the pathway cofactor biosynthesis; thiamine diphosphate biosynthesis; 4-methyl-5-(2-phosphoethyl)-thiazole from 5-(2-hydroxyethyl)-4-methylthiazole: step 1/1. Functionally, catalyzes the phosphorylation of the hydroxyl group of 4-methyl-5-beta-hydroxyethylthiazole (THZ). In Thermoanaerobacter sp. (strain X514), this protein is Hydroxyethylthiazole kinase.